Reading from the N-terminus, the 654-residue chain is tRNA 5-methylaminomethyl-2-thiouridine biosynthesis bifunctional protein MnmC (654 aa).

The tRNA (mnm(5)s(2)U34)-methyltransferase stretch occupies residues methionine 1 to alanine 236. The FAD-dependent cmnm(5)s(2)U34 oxidoreductase stretch occupies residues isoleucine 260–alanine 654.

In the N-terminal section; belongs to the methyltransferase superfamily. tRNA (mnm(5)s(2)U34)-methyltransferase family. The protein in the C-terminal section; belongs to the DAO family. Requires FAD as cofactor.

It is found in the cytoplasm. It catalyses the reaction 5-aminomethyl-2-thiouridine(34) in tRNA + S-adenosyl-L-methionine = 5-methylaminomethyl-2-thiouridine(34) in tRNA + S-adenosyl-L-homocysteine + H(+). Functionally, catalyzes the last two steps in the biosynthesis of 5-methylaminomethyl-2-thiouridine (mnm(5)s(2)U) at the wobble position (U34) in tRNA. Catalyzes the FAD-dependent demodification of cmnm(5)s(2)U34 to nm(5)s(2)U34, followed by the transfer of a methyl group from S-adenosyl-L-methionine to nm(5)s(2)U34, to form mnm(5)s(2)U34. This Burkholderia thailandensis (strain ATCC 700388 / DSM 13276 / CCUG 48851 / CIP 106301 / E264) protein is tRNA 5-methylaminomethyl-2-thiouridine biosynthesis bifunctional protein MnmC.